Consider the following 165-residue polypeptide: 3-isopropylmalate dehydratase small subunit 2 (165 aa).

This sequence belongs to the LeuD family. LeuD type 2 subfamily. As to quaternary structure, heterodimer of LeuC and LeuD.

It catalyses the reaction (2R,3S)-3-isopropylmalate = (2S)-2-isopropylmalate. Its pathway is amino-acid biosynthesis; L-leucine biosynthesis; L-leucine from 3-methyl-2-oxobutanoate: step 2/4. Its function is as follows. Catalyzes the isomerization between 2-isopropylmalate and 3-isopropylmalate, via the formation of 2-isopropylmaleate. This chain is 3-isopropylmalate dehydratase small subunit 2 (leuD2), found in Archaeoglobus fulgidus (strain ATCC 49558 / DSM 4304 / JCM 9628 / NBRC 100126 / VC-16).